The sequence spans 1516 residues: AP-4 complex accessory subunit RUSC2 (1516 aa).

Disordered stretches follow at residues 33 to 105, 202 to 224, 229 to 248, 331 to 351, 404 to 445, and 478 to 511; these read AGGG…PFLL, LDEC…SGFS, WKLS…SGDQ, SKMS…GYGC, LSSQ…PSEY, and GQVY…PVRL. A compositionally biased stretch (polar residues) spans 66–81; that stretch reads LFSSLHSTPGGTARSI. Basic and acidic residues predominate over residues 82–92; sequence DSTKSRSRDGR. The span at 206–217 shows a compositional bias: gly residues; that stretch reads GGPGGSGSGGGA. The segment covering 333–344 has biased composition (basic and acidic residues); it reads MSYESHHPESGG. A compositionally biased stretch (low complexity) spans 405 to 420; the sequence is SSQSSPSPAGSSITSC. Pro residues predominate over residues 428–440; sequence SPPPGPGPDPGPS. Over residues 480–493 the composition is skewed to polar residues; sequence VYTNTSPPNLSTGR. A phosphoserine mark is found at S536, S543, and S559. Disordered regions lie at residues 550–588, 646–688, 727–836, and 868–889; these read GRKK…APLD, LMDP…KEQR, RTQQ…PQKE, and ESLA…ANHL. Positions 567–579 are enriched in polar residues; sequence GDSSQEFSPIQEA. S656 bears the Phosphoserine mark. The span at 729–746 shows a compositional bias: low complexity; the sequence is QQPAPLAAPAAQVSVPAP. S781 is subject to Phosphoserine. Residues 791–801 show a composition bias toward low complexity; the sequence is PSTDSSASTSC. The 145-residue stretch at 1031–1175 folds into the RUN domain; sequence NVGHLVLKYL…LPFSLDLLFQ (145 aa). 3 disordered regions span residues 1210 to 1261, 1286 to 1408, and 1422 to 1449; these read RARG…GRAR, IEGS…LPSD, and QTVG…SSPP. The segment covering 1219 to 1230 has biased composition (basic and acidic residues); that stretch reads DVDRAAQGERVK. The segment covering 1237–1251 has biased composition (acidic residues); sequence GGEEEEEEEETEEVA. Over residues 1355 to 1364 the composition is skewed to basic and acidic residues; that stretch reads ELRRSREREG. 2 positions are modified to phosphoserine: S1368 and S1380. The segment covering 1426–1437 has biased composition (basic and acidic residues); sequence SRREPEPKESLQ. One can recognise an SH3 domain in the interval 1447 to 1506; that stretch reads SPPCEVQALCHHLATGPGQLSFHKGDILRVLGRAGGDWLRCSRGPDSGLVPLAYVTLTPT.

In terms of assembly, associated component of the adapter-like complex 4 (AP-4). Interacts with active RAB1A and RAB1B, and with GOLGA2. Interacts (via RUN domain) with RAB35 (GTP-bound form); the interaction recruits RUSC2 to the plasma membrane. As to expression, widely expressed, with highest levels in brain and testis.

Its subcellular location is the cytoplasm. It is found in the cytosol. The protein resides in the cell membrane. In terms of biological role, associates with the adapter-like complex 4 (AP-4) and may therefore play a role in vesicular trafficking of proteins at the trans-Golgi network. The polypeptide is AP-4 complex accessory subunit RUSC2 (Homo sapiens (Human)).